The following is a 1416-amino-acid chain: Gag-Pro-Pol polyprotein (1416 aa).

A lipid anchor (N-myristoyl glycine; by host) is attached at Gly-2. The PPXY motif signature appears at 100 to 103 (PPPY). 2 consecutive CCHC-type zinc fingers follow at residues 345-362 (GPCYRCLKEGHWARDCPT) and 370-387 (GPCPICKDPSHWKRDCPT). The Peptidase A2 domain occupies 447 to 525 (ALMLVDTGAE…DKWQILGRDV (79 aa)). The active-site Protease; shared with dimeric partner is the Asp-452. Positions 586-776 (LEAGYISPWD…SPVPFLGQMV (191 aa)) constitute a Reverse transcriptase domain. Positions 652, 727, 728, 1005, 1036, 1057, 1118, 1190, and 1247 each coordinate Mg(2+). Residues 996–1126 (IPAALCLFSD…VDQLLPLETP (131 aa)) enclose the RNase H type-1 domain. Positions 1179–1343 (RGWAPNHIWQ…SPPLAVISEG (165 aa)) constitute an Integrase catalytic domain. Residues 1352–1400 (KLFLYKLPGQNNRRWLGPLPALVEASGGALLATNPPVWVPWRLLKAFKC) constitute a DNA-binding region (integrase-type).

It belongs to the retroviral Pol polyprotein family. Homodimer; the homodimers are part of the immature particles. Interacts with human TSG101 and NEDD4; these interactions are essential for budding and release of viral particles. In terms of assembly, homodimer; further assembles as homohexamers. Mg(2+) serves as cofactor. In terms of processing, phosphorylation of the matrix protein p15 by MAPK1 seems to play a role in budding. Post-translationally, myristoylated. Myristoylation of the matrix (MA) domain mediates the transport and binding of Gag polyproteins to the host plasma membrane and is required for the assembly of viral particles. Specific enzymatic cleavages by the viral protease yield mature proteins. The polyprotein is cleaved during and after budding, this process is termed maturation. The protease is autoproteolytically processed at its N- and C-termini.

The protein resides in the virion. It carries out the reaction Endonucleolytic cleavage to 5'-phosphomonoester.. The catalysed reaction is DNA(n) + a 2'-deoxyribonucleoside 5'-triphosphate = DNA(n+1) + diphosphate. The matrix domain targets Gag, Gag-Pro and Gag-Pro-Pol polyproteins to the plasma membrane via a multipartite membrane binding signal, that includes its myristoylated N-terminus. Functionally, matrix protein. Its function is as follows. Forms the spherical core of the virus that encapsulates the genomic RNA-nucleocapsid complex. In terms of biological role, binds strongly to viral nucleic acids and promote their aggregation. Also destabilizes the nucleic acids duplexes via highly structured zinc-binding motifs. The aspartyl protease mediates proteolytic cleavages of Gag and Gag-Pol polyproteins during or shortly after the release of the virion from the plasma membrane. Cleavages take place as an ordered, step-wise cascade to yield mature proteins. This process is called maturation. Displays maximal activity during the budding process just prior to particle release from the cell. Functionally, RT is a multifunctional enzyme that converts the viral RNA genome into dsDNA in the cytoplasm, shortly after virus entry into the cell. This enzyme displays a DNA polymerase activity that can copy either DNA or RNA templates, and a ribonuclease H (RNase H) activity that cleaves the RNA strand of RNA-DNA heteroduplexes in a partially processive 3' to 5'-endonucleasic mode. Conversion of viral genomic RNA into dsDNA requires many steps. A tRNA-Pro binds to the primer-binding site (PBS) situated at the 5'-end of the viral RNA. RT uses the 3' end of the tRNA primer to perform a short round of RNA-dependent minus-strand DNA synthesis. The reading proceeds through the U5 region and ends after the repeated (R) region which is present at both ends of viral RNA. The portion of the RNA-DNA heteroduplex is digested by the RNase H, resulting in a ssDNA product attached to the tRNA primer. This ssDNA/tRNA hybridizes with the identical R region situated at the 3' end of viral RNA. This template exchange, known as minus-strand DNA strong stop transfer, can be either intra- or intermolecular. RT uses the 3' end of this newly synthesized short ssDNA to perform the RNA-dependent minus-strand DNA synthesis of the whole template. RNase H digests the RNA template except for a polypurine tract (PPT) situated at the 5' end of the genome. It is not clear if both polymerase and RNase H activities are simultaneous. RNase H probably can proceed both in a polymerase-dependent (RNA cut into small fragments by the same RT performing DNA synthesis) and a polymerase-independent mode (cleavage of remaining RNA fragments by free RTs). Secondly, RT performs DNA-directed plus-strand DNA synthesis using the PPT that has not been removed by RNase H as primer. PPT and tRNA primers are then removed by RNase H. The 3' and 5' ssDNA PBS regions hybridize to form a circular dsDNA intermediate. Strand displacement synthesis by RT to the PBS and PPT ends produces a blunt ended, linear dsDNA copy of the viral genome that includes long terminal repeats (LTRs) at both ends. Its function is as follows. Catalyzes viral DNA integration into the host chromosome, by performing a series of DNA cutting and joining reactions. The chain is Gag-Pro-Pol polyprotein (pol) from Bos taurus (Bovine).